The sequence spans 181 residues: Probable chemoreceptor glutamine deamidase CheD (181 aa).

Belongs to the CheD family.

The catalysed reaction is L-glutaminyl-[protein] + H2O = L-glutamyl-[protein] + NH4(+). Probably deamidates glutamine residues to glutamate on methyl-accepting chemotaxis receptors (MCPs), playing an important role in chemotaxis. This Agrobacterium fabrum (strain C58 / ATCC 33970) (Agrobacterium tumefaciens (strain C58)) protein is Probable chemoreceptor glutamine deamidase CheD.